A 496-amino-acid chain; its full sequence is ATP synthase subunit beta (496 aa).

ATP is bound at residue 155–162 (GGAGVGKT).

Belongs to the ATPase alpha/beta chains family. In terms of assembly, F-type ATPases have 2 components, CF(1) - the catalytic core - and CF(0) - the membrane proton channel. CF(1) has five subunits: alpha(3), beta(3), gamma(1), delta(1), epsilon(1). CF(0) has three main subunits: a(1), b(2) and c(9-12). The alpha and beta chains form an alternating ring which encloses part of the gamma chain. CF(1) is attached to CF(0) by a central stalk formed by the gamma and epsilon chains, while a peripheral stalk is formed by the delta and b chains.

It is found in the cell membrane. The enzyme catalyses ATP + H2O + 4 H(+)(in) = ADP + phosphate + 5 H(+)(out). Its function is as follows. Produces ATP from ADP in the presence of a proton gradient across the membrane. The catalytic sites are hosted primarily by the beta subunits. The protein is ATP synthase subunit beta of Karelsulcia muelleri (strain GWSS) (Sulcia muelleri).